A 264-amino-acid chain; its full sequence is Thymidylate synthase (264 aa).

Arg-21 lines the dUMP pocket. His-51 contributes to the (6R)-5,10-methylene-5,6,7,8-tetrahydrofolate binding site. Arg-126 to Arg-127 lines the dUMP pocket. The active-site Nucleophile is the Cys-146. Residues Arg-166–Asp-169, Asn-177, and His-207–Tyr-209 each bind dUMP. Residue Asp-169 coordinates (6R)-5,10-methylene-5,6,7,8-tetrahydrofolate. (6R)-5,10-methylene-5,6,7,8-tetrahydrofolate is bound at residue Ala-263.

The protein belongs to the thymidylate synthase family. Bacterial-type ThyA subfamily. Homodimer.

The protein localises to the cytoplasm. It catalyses the reaction dUMP + (6R)-5,10-methylene-5,6,7,8-tetrahydrofolate = 7,8-dihydrofolate + dTMP. The protein operates within pyrimidine metabolism; dTTP biosynthesis. Catalyzes the reductive methylation of 2'-deoxyuridine-5'-monophosphate (dUMP) to 2'-deoxythymidine-5'-monophosphate (dTMP) while utilizing 5,10-methylenetetrahydrofolate (mTHF) as the methyl donor and reductant in the reaction, yielding dihydrofolate (DHF) as a by-product. This enzymatic reaction provides an intracellular de novo source of dTMP, an essential precursor for DNA biosynthesis. The protein is Thymidylate synthase of Ruminiclostridium cellulolyticum (strain ATCC 35319 / DSM 5812 / JCM 6584 / H10) (Clostridium cellulolyticum).